We begin with the raw amino-acid sequence, 215 residues long: MRRVLITGFEPFGGERINPSWEVVKQMNDLMMGGVRIVARQLPCAFGEALTALNTAIDDVQPVLVLAIGQAGGRADITIERVAINVDDARIPDNLGNQPVDQPIIQEGPAAYFTRLPIKAMVQGIREAGIPASVSQTAGTYVCNHVMYGLLHRLNQFNNEVKGGFIHIPYLPEQAVDHPGAPSMSAHSVLVALELAISIALQIEHDLHITGGAVH.

Residues E80, C143, and H167 contribute to the active site.

Belongs to the peptidase C15 family. As to quaternary structure, homotetramer.

The protein localises to the cytoplasm. The catalysed reaction is Release of an N-terminal pyroglutamyl group from a polypeptide, the second amino acid generally not being Pro.. In terms of biological role, removes 5-oxoproline from various penultimate amino acid residues except L-proline. The protein is Pyrrolidone-carboxylate peptidase of Yersinia pseudotuberculosis serotype O:3 (strain YPIII).